We begin with the raw amino-acid sequence, 248 residues long: Mannose-binding protein C (248 aa).

The N-terminal stretch at 1-20 (MSLFPSLPLLLLSMVAASYS) is a signal peptide. The region spanning 42–99 (GINGFPGKDGRDGTKGEKGEPGQGLRGLQGPPGKLGPPGNPGPSGSPGAKGQKGDPGA) is the Collagen-like domain. The tract at residues 43 to 112 (INGFPGKDGR…CDSSLANPER (70 aa)) is disordered. Pro-47 is subject to 4-hydroxyproline. The segment covering 49 to 61 (KDGRDGTKGEKGE) has biased composition (basic and acidic residues). 4 positions are modified to 4-hydroxyproline: Pro-73, Pro-79, Pro-82, and Pro-88. Residues 112–130 (RKTLQTEINRIKKWVTFSL) are a coiled coil. The region spanning 134-245 (VGKKLFLTNG…CSSSHLVICE (112 aa)) is the C-type lectin domain. Intrachain disulfides connect Cys-155–Cys-244 and Cys-222–Cys-236.

As to quaternary structure, oligomeric complex of 3 or more homotrimers. Interacts with MASP1 and MASP2. Interacts with MEP1A and MEP1B and may inhibit their catalytic activity. Hydroxylation on proline residues within the sequence motif, GXPG, is most likely to be 4-hydroxy as this fits the requirement for 4-hydroxylation in vertebrates.

The protein localises to the secreted. Its function is as follows. Calcium-dependent lectin involved in innate immune defense. Binds mannose, fucose and N-acetylglucosamine on different microorganisms and activates the lectin complement pathway. Binds to late apoptotic cells, as well as to apoptotic blebs and to necrotic cells, but not to early apoptotic cells, facilitating their uptake by macrophages. The polypeptide is Mannose-binding protein C (MBL2) (Callithrix jacchus (White-tufted-ear marmoset)).